The following is a 445-amino-acid chain: Anthranilate N-benzoyltransferase protein 3 (445 aa).

Catalysis depends on proton acceptor residues His-164 and Asp-392.

This sequence belongs to the plant acyltransferase family. Post-translationally, N-terminus is blocked.

The catalysed reaction is anthranilate + benzoyl-CoA = N-benzoylanthranilate + CoA. Its pathway is phytoalexin biosynthesis; methoxydianthramide B biosynthesis. Catalyzes the formation of N-benzoylanthranilate, in the course of methoxydianthramide B, a phytoalexin. Phytoalexins are produced in response to infection by parasites, and are essential for the expression of disease resistance. The chain is Anthranilate N-benzoyltransferase protein 3 (HCBT3) from Dianthus caryophyllus (Carnation).